The sequence spans 341 residues: tRNA N6-adenosine threonylcarbamoyltransferase (341 aa).

Fe cation-binding residues include H111 and H115. Substrate is bound by residues 134 to 138, D167, G180, and N276; that span reads LVSGG. D304 serves as a coordination point for Fe cation.

It belongs to the KAE1 / TsaD family. Fe(2+) serves as cofactor.

The protein localises to the cytoplasm. It catalyses the reaction L-threonylcarbamoyladenylate + adenosine(37) in tRNA = N(6)-L-threonylcarbamoyladenosine(37) in tRNA + AMP + H(+). Required for the formation of a threonylcarbamoyl group on adenosine at position 37 (t(6)A37) in tRNAs that read codons beginning with adenine. Is involved in the transfer of the threonylcarbamoyl moiety of threonylcarbamoyl-AMP (TC-AMP) to the N6 group of A37, together with TsaE and TsaB. TsaD likely plays a direct catalytic role in this reaction. The protein is tRNA N6-adenosine threonylcarbamoyltransferase of Pseudomonas syringae pv. syringae (strain B728a).